A 151-amino-acid chain; its full sequence is Probable transcriptional regulator syrB3 (151 aa).

The interval 1–65 is disordered; that stretch reads MVDESNAGPV…QERSEKLRLI (65 aa). A compositionally biased stretch (low complexity) spans 7-23; it reads AGPVAPAVVADAEVKAP. The span at 52–65 shows a compositional bias: basic and acidic residues; it reads GYSEQERSEKLRLI.

It belongs to the SyrB family.

This is Probable transcriptional regulator syrB3 (syrB3) from Rhizobium meliloti (strain 1021) (Ensifer meliloti).